The following is a 135-amino-acid chain: P2Y purinoceptor 4 (135 aa).

The chain crosses the membrane as a helical span at residues 1 to 25 (VHFSSSVMVLLFGLPFLVTLVCYGL). Residues 26–49 (MALRLCRPLPGAGQSSSRLRSLRT) are Cytoplasmic-facing. The helical transmembrane segment at 50-72 (IAVVMTVFAVCLVPFHITRTIYY) threads the bilayer. The Extracellular portion of the chain corresponds to 73–90 (LARLLKADCQILNIVNVV). A helical membrane pass occupies residues 91-112 (YKVTRPLASANSCLDPLLYLFT). The Cytoplasmic portion of the chain corresponds to 113 to 135 (GDKYRHQLQRLCRVSAPQRRITA).

Belongs to the G-protein coupled receptor 1 family. In terms of tissue distribution, expressed in brain, heart, stria vascularis and vestibular labyrinth.

The protein localises to the cell membrane. In terms of biological role, receptor for ATP and UTP coupled to G-proteins that activate a phosphatidylinositol-calcium second messenger system. Not activated by UDP. This is P2Y purinoceptor 4 (P2RY4) from Meriones unguiculatus (Mongolian jird).